The following is a 96-amino-acid chain: Protein Vpr (96 aa).

Residues 1–42 (MEQAPEDQGPQREPHNEWTLELLEELKNEAVRHFPRIWLHGL) are homooligomerization. 3 positions are modified to phosphoserine; by host: serine 79, serine 94, and serine 96.

This sequence belongs to the HIV-1 VPR protein family. Homooligomer, may form homodimer. Interacts with p6-gag region of the Pr55 Gag precursor protein through a (Leu-X-X)4 motif near the C-terminus of the P6gag protein. Interacts with host UNG. May interact with host RAD23A/HHR23A. Interacts with host VPRBP/DCAF1, leading to hijack the CUL4A-RBX1-DDB1-DCAF1/VPRBP complex, mediating ubiquitination of host proteins such as TERT and ZGPAT and arrest of the cell cycle in G2 phase. Post-translationally, phosphorylated on several residues by host. These phosphorylations regulate VPR activity for the nuclear import of the HIV-1 pre-integration complex.

The protein localises to the virion. It localises to the host nucleus. The protein resides in the host extracellular space. During virus entry, plays a role in the transport of the viral pre-integration (PIC) complex to the host nucleus. This function is crucial for viral infection of non-dividing macrophages. May act directly at the nuclear pore complex, by binding nucleoporins phenylalanine-glycine (FG)-repeat regions. Functionally, during virus replication, may deplete host UNG protein, and incude G2-M cell cycle arrest. Acts by targeting specific host proteins for degradation by the 26S proteasome, through association with the cellular CUL4A-DDB1 E3 ligase complex by direct interaction with host VPRPB/DCAF-1. Cell cycle arrest reportedly occurs within hours of infection and is not blocked by antiviral agents, suggesting that it is initiated by the VPR carried into the virion. Additionally, VPR induces apoptosis in a cell cycle dependent manner suggesting that these two effects are mechanistically linked. Detected in the serum and cerebrospinal fluid of AIDS patient, VPR may also induce cell death to bystander cells. The chain is Protein Vpr from Human immunodeficiency virus type 1 group M subtype B (isolate BRU/LAI) (HIV-1).